Here is a 914-residue protein sequence, read N- to C-terminus: Valine--tRNA ligase (914 aa).

Positions 45 to 55 match the 'HIGH' region motif; the sequence is PNVTGSLHMGH. The short motif at 538 to 542 is the 'KMSKS' region element; the sequence is KMSKS. Position 541 (lysine 541) interacts with ATP. Positions 847-914 form a coiled coil; it reads LVDLDALKGR…LARKRLADLS (68 aa).

It belongs to the class-I aminoacyl-tRNA synthetase family. ValS type 1 subfamily. In terms of assembly, monomer.

The protein resides in the cytoplasm. It carries out the reaction tRNA(Val) + L-valine + ATP = L-valyl-tRNA(Val) + AMP + diphosphate. Catalyzes the attachment of valine to tRNA(Val). As ValRS can inadvertently accommodate and process structurally similar amino acids such as threonine, to avoid such errors, it has a 'posttransfer' editing activity that hydrolyzes mischarged Thr-tRNA(Val) in a tRNA-dependent manner. The protein is Valine--tRNA ligase of Parasynechococcus marenigrum (strain WH8102).